The chain runs to 305 residues: Probable 5-dehydro-4-deoxyglucarate dehydratase (305 aa).

This sequence belongs to the DapA family.

It carries out the reaction 5-dehydro-4-deoxy-D-glucarate + H(+) = 2,5-dioxopentanoate + CO2 + H2O. Its pathway is carbohydrate acid metabolism; D-glucarate degradation; 2,5-dioxopentanoate from D-glucarate: step 2/2. The polypeptide is Probable 5-dehydro-4-deoxyglucarate dehydratase (Xanthomonas campestris pv. campestris (strain 8004)).